A 248-amino-acid chain; its full sequence is tRNA (guanine-N(1)-)-methyltransferase (248 aa).

Residues glycine 113 and 133–138 each bind S-adenosyl-L-methionine; that span reads IGDYVL.

It belongs to the RNA methyltransferase TrmD family. Homodimer.

It localises to the cytoplasm. The enzyme catalyses guanosine(37) in tRNA + S-adenosyl-L-methionine = N(1)-methylguanosine(37) in tRNA + S-adenosyl-L-homocysteine + H(+). Functionally, specifically methylates guanosine-37 in various tRNAs. The sequence is that of tRNA (guanine-N(1)-)-methyltransferase from Shewanella frigidimarina (strain NCIMB 400).